The following is a 267-amino-acid chain: 2-keto-3-deoxy-L-rhamnonate aldolase (267 aa).

Histidine 49 acts as the Proton acceptor in catalysis. Position 151 (glutamine 151) interacts with substrate. Glutamate 153 serves as a coordination point for Mg(2+). The substrate site is built by alanine 178 and aspartate 179. Residue aspartate 179 coordinates Mg(2+).

The protein belongs to the HpcH/HpaI aldolase family. KDR aldolase subfamily. Homohexamer. The cofactor is Mg(2+).

It catalyses the reaction 2-dehydro-3-deoxy-L-rhamnonate = (S)-lactaldehyde + pyruvate. In terms of biological role, catalyzes the reversible retro-aldol cleavage of 2-keto-3-deoxy-L-rhamnonate (KDR) to pyruvate and lactaldehyde. The sequence is that of 2-keto-3-deoxy-L-rhamnonate aldolase from Shigella dysenteriae serotype 1 (strain Sd197).